Here is a 371-residue protein sequence, read N- to C-terminus: DNA replication and repair protein RecF (371 aa).

30-37 (GENAQGKT) lines the ATP pocket.

The protein belongs to the RecF family.

It localises to the cytoplasm. Functionally, the RecF protein is involved in DNA metabolism; it is required for DNA replication and normal SOS inducibility. RecF binds preferentially to single-stranded, linear DNA. It also seems to bind ATP. In Staphylococcus epidermidis (strain ATCC 35984 / DSM 28319 / BCRC 17069 / CCUG 31568 / BM 3577 / RP62A), this protein is DNA replication and repair protein RecF.